A 282-amino-acid chain; its full sequence is Formate channel FocB (282 aa).

Over 1–35 the chain is Cytoplasmic; it reads MRNKLSFDLQLSARKAAIAERIAAHKIARSKVSVF. Residues 36–56 form a helical membrane-spanning segment; it reads LMAMSAGVFMAIGFTFYLSVI. The Periplasmic portion of the chain corresponds to 57-68; it reads ADAPSSQALTHL. A helical membrane pass occupies residues 69-89; sequence VGGLCFTLGFILLAVCGTSLF. Over 90–112 the chain is Cytoplasmic; the sequence is TSSVMTVMAKSRGVISWRTWLIN. The chain crosses the membrane as a helical span at residues 113 to 133; sequence ALLVACGNLAGIACFSLLIWF. Residues 134–163 are Periplasmic-facing; sequence SGLVMSENAMWGVAVLHCAEGKMHHTFTES. A helical membrane pass occupies residues 164–184; sequence VSLGIMCNLMVCLALWMSYCG. Topologically, residues 185–190 are cytoplasmic; it reads RSLCDK. The chain crosses the membrane as a helical span at residues 191-211; it reads IVAMILPITLFVASGFEHCIA. Residues 212–248 are Periplasmic-facing; it reads NLFVIPFAIAIRHFAPPPFWQLAHSSADNFPALTVSH. The chain crosses the membrane as a helical span at residues 249–269; the sequence is FITANLLPVMLGNIIGGAVLV. Topologically, residues 270–282 are cytoplasmic; the sequence is SMCYRAIYLRQEP.

Belongs to the FNT transporter (TC 1.A.16) family.

The protein localises to the cell inner membrane. It catalyses the reaction formate(in) = formate(out). The direction of formate translocation depends on external pH and electron donor source. Functionally, involved in the bidirectional transport of formate during mixed-acid fermentation. The protein is Formate channel FocB of Escherichia coli (strain K12).